The sequence spans 292 residues: Triplex capsid protein 2 (292 aa).

Belongs to the herpesviridae TRX2 protein family. Interacts with TRX1 and major capisd protein/MCP.

The protein resides in the virion. It is found in the host nucleus. Its function is as follows. Structural component of the T=16 icosahedral capsid. The capsid is composed of pentamers and hexamers of major capsid protein/MCP, which are linked together by heterotrimers called triplexes. These triplexes are formed by a single molecule of triplex protein 1/TRX1 and two copies of triplex protein 2/TRX2. Additionally, TRX1 is required for efficient transport of TRX2 to the nucleus, which is the site of capsid assembly. The polypeptide is Triplex capsid protein 2 (Elephas maximus (Indian elephant)).